The primary structure comprises 198 residues: DnaJ homolog subfamily C member 12 (198 aa).

An N-acetylmethionine modification is found at M1. The region spanning 14–79 (DYYTLLGCDE…ASRARYDHWR (66 aa)) is the J domain. The interval 112–167 (MLEESDQTPTDKIENEEQDEQKEIKKEEFGSTTEKMEQKESKSVEKSFSPQNPDSP) is disordered. Residues 120–156 (PTDKIENEEQDEQKEIKKEEFGSTTEKMEQKESKSVE) show a composition bias toward basic and acidic residues. S160, S166, and S182 each carry phosphoserine.

Interacts with HSPA8. Interacts with TPH1. Interacts with TPH2.

The protein localises to the cytoplasm. In terms of biological role, probable co-chaperone that participates in the proper folding of biopterin-dependent aromatic amino acid hydroxylases, which include phenylalanine-4-hydroxylase (PAH), tyrosine 3-monooxygenase (TH) and peripheral and neuronal tryptophan hydroxylases (TPH1 and TPH2). This Bos taurus (Bovine) protein is DnaJ homolog subfamily C member 12 (DNAJC12).